Reading from the N-terminus, the 335-residue chain is MYPLARRILFALDAEKAHHFTLDALNMVYKLGLIPVTGNRTKPVKLMGLDLPNPVGLAAGLDKNGEYIDALGALGFGFIEIGTVTPNPQPGNPQPRLFRVPEYQGIINRMGFNNHGIDAMIQNIEKSKFSGVLGINIGKNAVTPIENAADDYLICLEKAYAHASYITVNISSPNTKNLRALQGGDELSALLEALKNKQAQLASVHGKYVPLAVKIAPDLDEAQIEDIAHVVKSVEMDGIIATNTTIDKSSLGSHPLAGEQGGLSGLPVHEKSNRVLKLLADHIDGKLPIIGVGGIMEGRDAAEKIRLGATAVQVYSGLIYKGPALVKECLKALAQ.

FMN is bound by residues 59-63 and Thr83; that span reads AGLDK. Lys63 is a substrate binding site. Position 108–112 (108–112) interacts with substrate; it reads NRMGF. Residues Asn136 and Asn169 each contribute to the FMN site. Asn169 provides a ligand contact to substrate. Ser172 functions as the Nucleophile in the catalytic mechanism. Substrate is bound at residue Asn174. Positions 214 and 242 each coordinate FMN. 243–244 contacts substrate; the sequence is NT. Residues Gly265, Gly294, and 315–316 contribute to the FMN site; that span reads YS.

It belongs to the dihydroorotate dehydrogenase family. Type 2 subfamily. Monomer. The cofactor is FMN.

It is found in the cell membrane. The catalysed reaction is (S)-dihydroorotate + a quinone = orotate + a quinol. The protein operates within pyrimidine metabolism; UMP biosynthesis via de novo pathway; orotate from (S)-dihydroorotate (quinone route): step 1/1. In terms of biological role, catalyzes the conversion of dihydroorotate to orotate with quinone as electron acceptor. This is Dihydroorotate dehydrogenase (quinone) from Neisseria meningitidis serogroup C / serotype 2a (strain ATCC 700532 / DSM 15464 / FAM18).